We begin with the raw amino-acid sequence, 302 residues long: Pseudouridine-5'-phosphate glycosidase (302 aa).

The active-site Proton donor is E25. 2 residues coordinate substrate: K86 and V106. D138 provides a ligand contact to Mn(2+). A substrate-binding site is contributed by 140 to 142; the sequence is SAD. K159 (nucleophile) is an active-site residue.

Belongs to the pseudouridine-5'-phosphate glycosidase family. As to quaternary structure, homotrimer. Mn(2+) serves as cofactor.

The enzyme catalyses D-ribose 5-phosphate + uracil = psi-UMP + H2O. In terms of biological role, catalyzes the reversible cleavage of pseudouridine 5'-phosphate (PsiMP) to ribose 5-phosphate and uracil. Functions biologically in the cleavage direction, as part of a pseudouridine degradation pathway. In Jannaschia sp. (strain CCS1), this protein is Pseudouridine-5'-phosphate glycosidase.